Consider the following 433-residue polypeptide: Serine/threonine-protein kinase KDX1 (433 aa).

The Protein kinase domain maps to 23–318 (FHLTGKIGRG…VEDALEHPYL (296 aa)). ATP is bound by residues 29-37 (IGRGSHSLI) and Lys55. Asp153 (proton acceptor) is an active-site residue.

This sequence belongs to the protein kinase superfamily. Ser/Thr protein kinase family. In terms of assembly, interacts with RLM1.

The enzyme catalyses L-seryl-[protein] + ATP = O-phospho-L-seryl-[protein] + ADP + H(+). It carries out the reaction L-threonyl-[protein] + ATP = O-phospho-L-threonyl-[protein] + ADP + H(+). Its function is as follows. Serine/threonine-protein kinase involved in the SLT2 mitogen-activated (MAP) kinase signaling pathway that regulates cell wall integrity. May also be involved in the mating pheromone and the CWI MAPK pathways. The protein is Serine/threonine-protein kinase KDX1 (KDX1) of Saccharomyces cerevisiae (strain ATCC 204508 / S288c) (Baker's yeast).